Consider the following 360-residue polypeptide: sn-glycerol-3-phosphate import ATP-binding protein UgpC (360 aa).

The ABC transporter domain occupies 4–235 (LSLKGVRKSY…PATTFVASFI (232 aa)). 37–44 (GPSGCGKS) serves as a coordination point for ATP.

Belongs to the ABC transporter superfamily. sn-glycerol-3-phosphate importer (TC 3.A.1.1.3) family. In terms of assembly, the complex is composed of two ATP-binding proteins (UgpC), two transmembrane proteins (UgpA and UgpE) and a solute-binding protein (UgpB).

It is found in the cell inner membrane. It catalyses the reaction sn-glycerol 3-phosphate(out) + ATP + H2O = sn-glycerol 3-phosphate(in) + ADP + phosphate + H(+). Its function is as follows. Part of the ABC transporter complex UgpBAEC involved in sn-glycerol-3-phosphate (G3P) import. Responsible for energy coupling to the transport system. This chain is sn-glycerol-3-phosphate import ATP-binding protein UgpC, found in Burkholderia pseudomallei (strain K96243).